The chain runs to 251 residues: tRNA-cytidine(32) 2-sulfurtransferase 2 (251 aa).

The PP-loop motif motif lies at 33–38 (SGGKDS). [4Fe-4S] cluster-binding residues include Cys108, Cys111, and Cys199.

The protein belongs to the TtcA family. As to quaternary structure, homodimer. Mg(2+) serves as cofactor. Requires [4Fe-4S] cluster as cofactor.

The protein resides in the cytoplasm. It carries out the reaction cytidine(32) in tRNA + S-sulfanyl-L-cysteinyl-[cysteine desulfurase] + AH2 + ATP = 2-thiocytidine(32) in tRNA + L-cysteinyl-[cysteine desulfurase] + A + AMP + diphosphate + H(+). The protein operates within tRNA modification. Catalyzes the ATP-dependent 2-thiolation of cytidine in position 32 of tRNA, to form 2-thiocytidine (s(2)C32). The sulfur atoms are provided by the cysteine/cysteine desulfurase (IscS) system. In Francisella tularensis subsp. tularensis (strain WY96-3418), this protein is tRNA-cytidine(32) 2-sulfurtransferase 2.